Consider the following 356-residue polypeptide: MTKIAFTGGGTVGHVSVNLSLIPTALSQGYEALYIGSKNGIEREMIESQLPEIKYYPISSGKLRRYISLENAKDVFKVLKGILDARKVLKKEKPDLLFSKGGFVSVPVVIAAKSLNIPTIIHESDLTPGLANKIALKFAKKIYTTFEETLNYLPKEKADFIGATIREDLKNGNAHSGYQLTGFNENKKVLLVMGGSLGSKKLNSIIRENLDALLQQYQVIHLTGKGLKDNQVKKSGYIQYEFVKEDLTDLLAITDTVISRAGSNAIYEFLTLRIPMLLVPLGLDQSRGDQIDNANHFADKGYAKAIDEEQLTVQILLQELNEMEQERTRIINNMKSYEQSYTKEALFDKMIKDALN.

3 residues coordinate UDP-N-acetyl-alpha-D-glucosamine: Arg166, Ser196, and Gln290.

Belongs to the glycosyltransferase 28 family. MurG subfamily.

Its subcellular location is the cell membrane. The catalysed reaction is Mur2Ac(oyl-L-Ala-gamma-D-Glu-L-Lys-D-Ala-D-Ala)-di-trans,octa-cis-undecaprenyl diphosphate + UDP-N-acetyl-alpha-D-glucosamine = beta-D-GlcNAc-(1-&gt;4)-Mur2Ac(oyl-L-Ala-gamma-D-Glu-L-Lys-D-Ala-D-Ala)-di-trans,octa-cis-undecaprenyl diphosphate + UDP + H(+). Its pathway is cell wall biogenesis; peptidoglycan biosynthesis. Cell wall formation. Catalyzes the transfer of a GlcNAc subunit on undecaprenyl-pyrophosphoryl-MurNAc-pentapeptide (lipid intermediate I) to form undecaprenyl-pyrophosphoryl-MurNAc-(pentapeptide)GlcNAc (lipid intermediate II). This is UDP-N-acetylglucosamine--N-acetylmuramyl-(pentapeptide) pyrophosphoryl-undecaprenol N-acetylglucosamine transferase from Staphylococcus aureus (strain bovine RF122 / ET3-1).